We begin with the raw amino-acid sequence, 359 residues long: Carbamoyl phosphate synthase arginine-specific small chain (359 aa).

Residues Met1–His168 form a CPSase region. 3 residues coordinate L-glutamine: Ser45, Gly216, and Gly218. The 188-residue stretch at His168–Glu355 folds into the Glutamine amidotransferase type-1 domain. Cys243 acts as the Nucleophile in catalysis. L-glutamine is bound by residues Leu244, Gln247, Asn285, and Tyr288. Active-site residues include His328 and Glu330.

Belongs to the CarA family. In terms of assembly, composed of two chains; the small (or glutamine) chain promotes the hydrolysis of glutamine to ammonia, which is used by the large (or ammonia) chain to synthesize carbamoyl phosphate. Tetramer of heterodimers (alpha,beta)4.

It catalyses the reaction hydrogencarbonate + L-glutamine + 2 ATP + H2O = carbamoyl phosphate + L-glutamate + 2 ADP + phosphate + 2 H(+). The catalysed reaction is L-glutamine + H2O = L-glutamate + NH4(+). Its pathway is amino-acid biosynthesis; L-arginine biosynthesis; carbamoyl phosphate from bicarbonate: step 1/1. Functionally, small subunit of the glutamine-dependent carbamoyl phosphate synthetase (CPSase). CPSase catalyzes the formation of carbamoyl phosphate from the ammonia moiety of glutamine, carbonate, and phosphate donated by ATP, constituting the first step of the biosynthetic pathway leading to arginine and/or urea. The small subunit (glutamine amidotransferase) binds and cleaves glutamine to supply the large subunit with the substrate ammonia. This chain is Carbamoyl phosphate synthase arginine-specific small chain, found in Halalkalibacterium halodurans (strain ATCC BAA-125 / DSM 18197 / FERM 7344 / JCM 9153 / C-125) (Bacillus halodurans).